The chain runs to 351 residues: Probable dual-specificity RNA methyltransferase RlmN (351 aa).

E92 acts as the Proton acceptor in catalysis. The 237-residue stretch at 98 to 334 (SGDRLTVCVS…VRWSKGLGAD (237 aa)) folds into the Radical SAM core domain. A disulfide bridge links C105 with C337. Residues C112, C116, and C119 each coordinate [4Fe-4S] cluster. S-adenosyl-L-methionine is bound by residues 159 to 160 (GE), S189, 218 to 220 (SLH), and N294. C337 serves as the catalytic S-methylcysteine intermediate.

It belongs to the radical SAM superfamily. RlmN family. Requires [4Fe-4S] cluster as cofactor.

It is found in the cytoplasm. The enzyme catalyses adenosine(2503) in 23S rRNA + 2 reduced [2Fe-2S]-[ferredoxin] + 2 S-adenosyl-L-methionine = 2-methyladenosine(2503) in 23S rRNA + 5'-deoxyadenosine + L-methionine + 2 oxidized [2Fe-2S]-[ferredoxin] + S-adenosyl-L-homocysteine. It catalyses the reaction adenosine(37) in tRNA + 2 reduced [2Fe-2S]-[ferredoxin] + 2 S-adenosyl-L-methionine = 2-methyladenosine(37) in tRNA + 5'-deoxyadenosine + L-methionine + 2 oxidized [2Fe-2S]-[ferredoxin] + S-adenosyl-L-homocysteine. Specifically methylates position 2 of adenine 2503 in 23S rRNA and position 2 of adenine 37 in tRNAs. This chain is Probable dual-specificity RNA methyltransferase RlmN, found in Synechococcus sp. (strain ATCC 27144 / PCC 6301 / SAUG 1402/1) (Anacystis nidulans).